The sequence spans 242 residues: Uridylate kinase (242 aa).

ATP is bound at residue 16 to 19 (KVSG). A UMP-binding site is contributed by Gly-58. Residues Gly-59 and Arg-63 each contribute to the ATP site. Residues Asp-78 and 139-146 (TGNPFCTT) contribute to the UMP site. Residues Thr-166, Gln-167, Tyr-172, and Asp-175 each contribute to the ATP site.

This sequence belongs to the UMP kinase family. Homohexamer.

Its subcellular location is the cytoplasm. It catalyses the reaction UMP + ATP = UDP + ADP. Its pathway is pyrimidine metabolism; CTP biosynthesis via de novo pathway; UDP from UMP (UMPK route): step 1/1. Its activity is regulated as follows. Inhibited by UTP. In terms of biological role, catalyzes the reversible phosphorylation of UMP to UDP. The sequence is that of Uridylate kinase from Rickettsia massiliae (strain Mtu5).